A 301-amino-acid polypeptide reads, in one-letter code: Cilia- and flagella-associated protein 161 (301 aa).

The interval 269–301 is disordered; sequence GNPRDASSSMLDLPKPPTEDTRAMEQAMGLDTQ.

In terms of assembly, microtubule inner protein component of sperm flagellar doublet microtubules. As to expression, expressed in airway epithelial cells.

It is found in the cytoplasm. Its subcellular location is the cytoskeleton. It localises to the cilium axoneme. The protein resides in the flagellum axoneme. Microtubule inner protein (MIP) part of the dynein-decorated doublet microtubules (DMTs) in cilia axoneme, which is required for motile cilia beating. The sequence is that of Cilia- and flagella-associated protein 161 from Homo sapiens (Human).